The following is a 101-amino-acid chain: Small integral membrane protein 19 (101 aa).

Residues 25-43 (ATNVYLIVILVSIGLFMYA) form a helical membrane-spanning segment.

This sequence belongs to the SMIM19 family.

It is found in the membrane. This is Small integral membrane protein 19 (smim19) from Xenopus tropicalis (Western clawed frog).